Here is a 38-residue protein sequence, read N- to C-terminus: MKIRSSIKKRSSGCQIVRRKGVLYVINKKNPRFKQRQG.

It belongs to the bacterial ribosomal protein bL36 family.

This Amoebophilus asiaticus (strain 5a2) protein is Large ribosomal subunit protein bL36.